The primary structure comprises 276 residues: Ribosomal RNA small subunit methyltransferase A (276 aa).

S-adenosyl-L-methionine-binding residues include asparagine 28, leucine 30, glycine 55, glutamate 77, aspartate 103, and asparagine 124.

This sequence belongs to the class I-like SAM-binding methyltransferase superfamily. rRNA adenine N(6)-methyltransferase family. RsmA subfamily.

It localises to the cytoplasm. It catalyses the reaction adenosine(1518)/adenosine(1519) in 16S rRNA + 4 S-adenosyl-L-methionine = N(6)-dimethyladenosine(1518)/N(6)-dimethyladenosine(1519) in 16S rRNA + 4 S-adenosyl-L-homocysteine + 4 H(+). Functionally, specifically dimethylates two adjacent adenosines (A1518 and A1519) in the loop of a conserved hairpin near the 3'-end of 16S rRNA in the 30S particle. May play a critical role in biogenesis of 30S subunits. The sequence is that of Ribosomal RNA small subunit methyltransferase A from Agrobacterium fabrum (strain C58 / ATCC 33970) (Agrobacterium tumefaciens (strain C58)).